A 272-amino-acid polypeptide reads, in one-letter code: MSTMAVVERRKEDIPSAQLVKKEVVYETNGLNVWYGEHHALKHIHLSFYEREITAIIGPSGCGKSTYIKTLNRMIELIPNVRLEGEILYRGRRIFDTSYPVEQLRTQVGMVFQKPNPFPKSIYDNVAYGPRIHGIRDRRRLDEIVEKSLRQAALWEEVKDRLHENALGLSGGQQQRLCIARCLAVEPDVILMDEPTSALDPISTAKVEELMGELKTKYSIIIVTHNMQQAARISDRTAFFLNGEVIEYGETKTLFSRPADQRTADYIAGRFG.

The 248-residue stretch at 20-267 folds into the ABC transporter domain; sequence VKKEVVYETN…PADQRTADYI (248 aa). 58–65 lines the ATP pocket; it reads GPSGCGKS.

The protein belongs to the ABC transporter superfamily. Phosphate importer (TC 3.A.1.7) family. The complex is composed of two ATP-binding proteins (PstB), two transmembrane proteins (PstC and PstA) and a solute-binding protein (PstS).

Its subcellular location is the cell membrane. The enzyme catalyses phosphate(out) + ATP + H2O = ADP + 2 phosphate(in) + H(+). Part of the ABC transporter complex PstSACB involved in phosphate import. Responsible for energy coupling to the transport system. This chain is Phosphate import ATP-binding protein PstB, found in Geobacillus kaustophilus (strain HTA426).